The sequence spans 339 residues: tRNA N6-adenosine threonylcarbamoyltransferase (339 aa).

His-114 and His-118 together coordinate Fe cation. Substrate is bound by residues 137 to 141 (VVSGG), Asp-170, Gly-183, Asp-187, and Asn-277. Residue Asp-305 participates in Fe cation binding.

This sequence belongs to the KAE1 / TsaD family. The cofactor is Fe(2+).

The protein resides in the cytoplasm. The enzyme catalyses L-threonylcarbamoyladenylate + adenosine(37) in tRNA = N(6)-L-threonylcarbamoyladenosine(37) in tRNA + AMP + H(+). Its function is as follows. Required for the formation of a threonylcarbamoyl group on adenosine at position 37 (t(6)A37) in tRNAs that read codons beginning with adenine. Is involved in the transfer of the threonylcarbamoyl moiety of threonylcarbamoyl-AMP (TC-AMP) to the N6 group of A37, together with TsaE and TsaB. TsaD likely plays a direct catalytic role in this reaction. This is tRNA N6-adenosine threonylcarbamoyltransferase from Clostridium beijerinckii (strain ATCC 51743 / NCIMB 8052) (Clostridium acetobutylicum).